Consider the following 665-residue polypeptide: UvrABC system protein B (665 aa).

The Helicase ATP-binding domain maps to Asn25 to Val176. Gly38–Thr45 is a binding site for ATP. A Beta-hairpin motif is present at residues Tyr91–Ile114. In terms of domain architecture, Helicase C-terminal spans Gln429–Ile595. Residues Pro626 to Lys661 form the UVR domain.

It belongs to the UvrB family. As to quaternary structure, forms a heterotetramer with UvrA during the search for lesions. Interacts with UvrC in an incision complex.

The protein localises to the cytoplasm. In terms of biological role, the UvrABC repair system catalyzes the recognition and processing of DNA lesions. A damage recognition complex composed of 2 UvrA and 2 UvrB subunits scans DNA for abnormalities. Upon binding of the UvrA(2)B(2) complex to a putative damaged site, the DNA wraps around one UvrB monomer. DNA wrap is dependent on ATP binding by UvrB and probably causes local melting of the DNA helix, facilitating insertion of UvrB beta-hairpin between the DNA strands. Then UvrB probes one DNA strand for the presence of a lesion. If a lesion is found the UvrA subunits dissociate and the UvrB-DNA preincision complex is formed. This complex is subsequently bound by UvrC and the second UvrB is released. If no lesion is found, the DNA wraps around the other UvrB subunit that will check the other stand for damage. The chain is UvrABC system protein B from Gloeothece citriformis (strain PCC 7424) (Cyanothece sp. (strain PCC 7424)).